A 973-amino-acid chain; its full sequence is ATP-dependent DNA helicase Q5 (973 aa).

One can recognise a Helicase ATP-binding domain in the interval 39-213; sequence MAVVKGDKDV…FAALHLKQPV (175 aa). 52-59 is a binding site for ATP; it reads MPTGAGKS. The short motif at 157–160 is the DEAH box element; it reads DEAH. A Helicase C-terminal domain is found at 241-398; that stretch reads NLRDFCLKAL…NKPSDKATLL (158 aa). Residues Cys-412, Cys-428, Cys-432, and Cys-435 each coordinate Zn(2+). A phosphoserine mark is found at Ser-489 and Ser-492. The tract at residues 491-621 is interaction with POLR2A; sequence GSGDEGRDEA…ASKDGQLYDM (131 aa). 3 disordered regions span residues 518–538, 679–795, and 822–884; these read GKEAKPEEFTPPGEDCPLRDA, TEKL…VPGK, and CSLE…AREP. Phosphothreonine is present on Thr-527. The interval 653 to 726 is interaction with RAD51; sequence PKRVGAGFSK…APGSRTNCGD (74 aa). Position 728 is a phosphoserine; by CDK1 (Ser-728). Basic and acidic residues predominate over residues 840–856; sequence TQAEKRPRPQQESQEKR. A compositionally biased stretch (polar residues) spans 863 to 878; it reads PSTNSSALASDPSTEN.

The protein belongs to the helicase family. RecQ subfamily. Monomer. Interacts with TOP2A, TOP3A and TOP3B. Interacts with RNA polymerase II subunit POLR2A. Identified in a complex with the RNA polymerase II core bound to DNA. Interacts with RAD51. Interacts with WRN; this interaction stimulates WRN helicase activity on DNA fork duplexes. Interacts with MUS1; this interaction promotes MUS81-dependent mitotic DNA synthesis. Requires Zn(2+) as cofactor. In terms of processing, phosphorylated by CDK1 at Ser-728; this phosphorylation is required for RECQL5-mediated disruption of RAD51 filaments on stalled replication forks.

It is found in the nucleus. The protein resides in the nucleoplasm. The catalysed reaction is Couples ATP hydrolysis with the unwinding of duplex DNA by translocating in the 3'-5' direction.. The enzyme catalyses ATP + H2O = ADP + phosphate + H(+). In terms of biological role, DNA helicase that plays an important role in DNA replication, transcription and repair. Binds to the RNA polymerase II subunit POLR2A during transcription elongation and suppresses transcription-associated genomic instability. Also associates with POLR1A and enforces the stability of ribosomal DNA arrays. Plays an important role in mitotic chromosome separation after cross-over events and cell cycle progress. Mechanistically, removes RAD51 filaments protecting stalled replication forks at common fragile sites and stimulates MUS81-EME1 endonuclease leading to mitotic DNA synthesis. Required for efficient DNA repair, including repair of inter-strand cross-links. Stimulates DNA decatenation mediated by TOP2A. Prevents sister chromatid exchange and homologous recombination. This Rattus norvegicus (Rat) protein is ATP-dependent DNA helicase Q5 (Recql5).